A 240-amino-acid chain; its full sequence is UDP-2,3-diacylglucosamine hydrolase (240 aa).

The Mn(2+) site is built by Asp8, His10, Asp41, Asn79, and His114. Substrate is bound at residue 79–80 (NR). Residues Asp122, Ser160, Asn164, Lys167, and His195 each coordinate substrate. Residues His195 and His197 each contribute to the Mn(2+) site.

Belongs to the LpxH family. Requires Mn(2+) as cofactor.

It is found in the cell inner membrane. The catalysed reaction is UDP-2-N,3-O-bis[(3R)-3-hydroxytetradecanoyl]-alpha-D-glucosamine + H2O = 2-N,3-O-bis[(3R)-3-hydroxytetradecanoyl]-alpha-D-glucosaminyl 1-phosphate + UMP + 2 H(+). It functions in the pathway glycolipid biosynthesis; lipid IV(A) biosynthesis; lipid IV(A) from (3R)-3-hydroxytetradecanoyl-[acyl-carrier-protein] and UDP-N-acetyl-alpha-D-glucosamine: step 4/6. Hydrolyzes the pyrophosphate bond of UDP-2,3-diacylglucosamine to yield 2,3-diacylglucosamine 1-phosphate (lipid X) and UMP by catalyzing the attack of water at the alpha-P atom. Involved in the biosynthesis of lipid A, a phosphorylated glycolipid that anchors the lipopolysaccharide to the outer membrane of the cell. The sequence is that of UDP-2,3-diacylglucosamine hydrolase from Escherichia coli O157:H7.